The chain runs to 96 residues: MNIFLVIHELINQADQVNVTLTNHVGAYIGAGMAMTAAAGVGVGQGFASGLCATALARNPELLPKIQLFWIVGSAIAESSAIYGLIIAFILIFVAR.

A run of 2 helical transmembrane segments spans residues 24-44 (HVGAYIGAGMAMTAAAGVGVG) and 75-95 (AIAESSAIYGLIIAFILIFVA).

It belongs to the ATPase C chain family. F-type ATPases have 2 components, F(1) - the catalytic core - and F(0) - the membrane proton channel. F(1) has five subunits: alpha(3), beta(3), gamma(1), delta(1), epsilon(1). F(0) has three main subunits: a(1), b(2) and c(10-14). The alpha and beta chains form an alternating ring which encloses part of the gamma chain. F(1) is attached to F(0) by a central stalk formed by the gamma and epsilon chains, while a peripheral stalk is formed by the delta and b chains.

The protein localises to the cell membrane. Its function is as follows. F(1)F(0) ATP synthase produces ATP from ADP in the presence of a proton or sodium gradient. F-type ATPases consist of two structural domains, F(1) containing the extramembraneous catalytic core and F(0) containing the membrane proton channel, linked together by a central stalk and a peripheral stalk. During catalysis, ATP synthesis in the catalytic domain of F(1) is coupled via a rotary mechanism of the central stalk subunits to proton translocation. Functionally, key component of the F(0) channel; it plays a direct role in translocation across the membrane. A homomeric c-ring of between 10-14 subunits forms the central stalk rotor element with the F(1) delta and epsilon subunits. This Mycoplasmoides gallisepticum (strain R(low / passage 15 / clone 2)) (Mycoplasma gallisepticum) protein is ATP synthase subunit c.